The primary structure comprises 388 residues: Probable ubiquitin-conjugating enzyme E2 L709 (388 aa).

The UBC core domain maps to 3 to 162; the sequence is NVHKRVIKDI…GNDLMVQKLF (160 aa). The active-site Glycyl thioester intermediate is the Cys-95. Positions 195 to 388 are disordered; the sequence is VEEKSAKTSK…SSKSSKTGKK (194 aa). Acidic residues-rich tracts occupy residues 221 to 238 and 246 to 297; these read SEEEENSDDDNTDSDSES and DVVD…ESEE. Residues 310–388 show a composition bias toward low complexity; it reads KTTTKSSSTK…SSKSSKTGKK (79 aa).

The protein belongs to the ubiquitin-conjugating enzyme family.

The enzyme catalyses S-ubiquitinyl-[E1 ubiquitin-activating enzyme]-L-cysteine + [E2 ubiquitin-conjugating enzyme]-L-cysteine = [E1 ubiquitin-activating enzyme]-L-cysteine + S-ubiquitinyl-[E2 ubiquitin-conjugating enzyme]-L-cysteine.. The protein operates within protein modification; protein ubiquitination. Functionally, catalyzes the covalent attachment of ubiquitin to other proteins. The chain is Probable ubiquitin-conjugating enzyme E2 L709 from Acanthamoeba polyphaga (Amoeba).